The sequence spans 126 residues: MAFYEHVVIARQDISPQQAEALNEQLKALLEENGGHIAKIEYWGLRNLTYRIKKNRKGHYSLLAIDAPAAAVKEMERQLLINEDVLRFMTIRVEELDLELSPVLARRDRERGERSERPRDDFAPAA.

Positions arginine 107 to alanine 126 are disordered.

It belongs to the bacterial ribosomal protein bS6 family.

In terms of biological role, binds together with bS18 to 16S ribosomal RNA. The polypeptide is Small ribosomal subunit protein bS6 (Caulobacter sp. (strain K31)).